We begin with the raw amino-acid sequence, 611 residues long: L-tyrosine decarboxylase (611 aa).

Pyridoxal 5'-phosphate-binding positions include 151 to 152 (GS), Thr292, and 382 to 384 (DPH). Position 385 is an N6-(pyridoxal phosphate)lysine (Lys385). Tyr413 acts as the Proton donor in catalysis. A pyridoxal 5'-phosphate-binding site is contributed by Ser433.

The protein belongs to the group II decarboxylase family. Tyrosine decarboxylase subfamily. Homodimer. Pyridoxal 5'-phosphate serves as cofactor.

The enzyme catalyses L-tyrosine + H(+) = tyramine + CO2. It catalyses the reaction L-dopa + H(+) = dopamine + CO2. It participates in amino-acid metabolism. Levodopa decarboxylation is not inhibited by carbidopa, benserazide, and methyldopa, that are three human L-dopa decarboxylase inhibitors. Catalyzes the decarboxylation of L-tyrosine to produce tyramine. Plays a role in acid resistance since tyramine production via tyrosine decarboxylation appears to provide a cytosolic pH maintenance mechanism that helps the bacterium cope with acid stress such as that encountered in gastrointestinal tract (GIT) environments. Therefore, may contribute to the colonization of the human GIT by E.faecium. In terms of biological role, also involved in drug metabolism, being able to catalyze decarboxylation of levodopa (L-dopa) to dopamine. In gut microbiota this enzyme is in fact exclusively responsible for the decarboxylation of levodopa, and thus reduces in situ levels of levodopa in the treatment of Parkinson's disease. It was shown that abundance of bacterial tyrosine decarboxylase in the proximal small intestine - the primary site of levodopa absorption - contributes to interindividual variation in drug efficacy and can explain the requirement for an increased dosage regimen of levodopa treatment in Parkinson's disease patients. This is L-tyrosine decarboxylase from Enterococcus faecium (Streptococcus faecium).